The chain runs to 771 residues: Nitrogen regulation protein NtrY (771 aa).

4 consecutive transmembrane segments (helical) span residues 22 to 46, 56 to 76, 99 to 122, and 295 to 319; these read FGLF…ILMG, VVIS…AMVG, IVGL…SLTL, and VAFA…GLNF. The 54-residue stretch at 321-374 folds into the HAMP domain; that stretch reads KWLVAPIRRLMSAADHVAEGNLDVRVPIYRAEGDLASLAETFNKMTHELRSQRE. The region spanning 386-458 is the PAS domain; sequence RRRFTEAVLS…HARQRSVQGN (73 aa). The Histidine kinase domain maps to 511–728; sequence RIAHEIKNPL…WIRLTLKAEG (218 aa). At H514 the chain carries Phosphohistidine; by autocatalysis. Positions 727 to 771 are disordered; that stretch reads EGPKAEPTDASTKATGAATPAAPAASAMARDAAADSAARGKNERT. Residues 740–763 show a composition bias toward low complexity; that stretch reads ATGAATPAAPAASAMARDAAADSA.

The protein localises to the cell membrane. The enzyme catalyses ATP + protein L-histidine = ADP + protein N-phospho-L-histidine.. Member of the two-component regulatory system NtrY/NtrX involved in nitrogen level control. Probably activates NtrX by phosphorylation. The polypeptide is Nitrogen regulation protein NtrY (ntrY) (Azorhizobium caulinodans (strain ATCC 43989 / DSM 5975 / JCM 20966 / LMG 6465 / NBRC 14845 / NCIMB 13405 / ORS 571)).